The sequence spans 79 residues: Putative antitoxin MM_2475 (79 aa).

It belongs to the UPF0330 family.

Functionally, possibly the antitoxin component of a type II toxin-antitoxin (TA) system. The chain is Putative antitoxin MM_2475 from Methanosarcina mazei (strain ATCC BAA-159 / DSM 3647 / Goe1 / Go1 / JCM 11833 / OCM 88) (Methanosarcina frisia).